A 320-amino-acid chain; its full sequence is Malate dehydrogenase (320 aa).

NAD(+)-binding positions include Gly-10–Gly-15 and Asp-34. 2 residues coordinate substrate: Arg-83 and Arg-89. NAD(+) is bound by residues Asn-96 and Ile-119 to Asn-121. Substrate-binding residues include Asn-121 and Arg-152. The active-site Proton acceptor is the His-176.

Belongs to the LDH/MDH superfamily. MDH type 3 family.

It catalyses the reaction (S)-malate + NAD(+) = oxaloacetate + NADH + H(+). Its function is as follows. Catalyzes the reversible oxidation of malate to oxaloacetate. This chain is Malate dehydrogenase, found in Rhizobium johnstonii (strain DSM 114642 / LMG 32736 / 3841) (Rhizobium leguminosarum bv. viciae).